Reading from the N-terminus, the 249-residue chain is uncharacterized protein (249 aa).

The first 36 residues, 1 to 36 (MAKSPARRCTAKVRRVLSRSVLILCWSLLGAAPAHA), serve as a signal peptide directing secretion. Residues 227-249 (ARQPPGRWVCPSSAGGPIGWHRQ) form a disordered region.

This is an uncharacterized protein from Mycobacterium tuberculosis (strain CDC 1551 / Oshkosh).